Here is a 49-residue protein sequence, read N- to C-terminus: Large ribosomal subunit protein bL33 (49 aa).

It belongs to the bacterial ribosomal protein bL33 family.

This is Large ribosomal subunit protein bL33 from Lactobacillus acidophilus (strain ATCC 700396 / NCK56 / N2 / NCFM).